A 401-amino-acid polypeptide reads, in one-letter code: Probable 2,3-bisphosphoglycerate-independent phosphoglycerate mutase (401 aa).

It belongs to the BPG-independent phosphoglycerate mutase family. A-PGAM subfamily.

The catalysed reaction is (2R)-2-phosphoglycerate = (2R)-3-phosphoglycerate. The protein operates within carbohydrate degradation; glycolysis; pyruvate from D-glyceraldehyde 3-phosphate: step 3/5. Its function is as follows. Catalyzes the interconversion of 2-phosphoglycerate and 3-phosphoglycerate. The chain is Probable 2,3-bisphosphoglycerate-independent phosphoglycerate mutase from Thermotoga neapolitana (strain ATCC 49049 / DSM 4359 / NBRC 107923 / NS-E).